A 295-amino-acid chain; its full sequence is Ribosomal RNA small subunit methyltransferase A (295 aa).

S-adenosyl-L-methionine is bound by residues asparagine 31, leucine 33, glycine 58, glutamate 79, aspartate 104, and asparagine 129.

It belongs to the class I-like SAM-binding methyltransferase superfamily. rRNA adenine N(6)-methyltransferase family. RsmA subfamily.

The protein localises to the cytoplasm. It carries out the reaction adenosine(1518)/adenosine(1519) in 16S rRNA + 4 S-adenosyl-L-methionine = N(6)-dimethyladenosine(1518)/N(6)-dimethyladenosine(1519) in 16S rRNA + 4 S-adenosyl-L-homocysteine + 4 H(+). Its function is as follows. Specifically dimethylates two adjacent adenosines (A1518 and A1519) in the loop of a conserved hairpin near the 3'-end of 16S rRNA in the 30S particle. May play a critical role in biogenesis of 30S subunits. In Enterococcus faecalis (strain ATCC 700802 / V583), this protein is Ribosomal RNA small subunit methyltransferase A.